Here is a 214-residue protein sequence, read N- to C-terminus: Variable small protein 24 (214 aa).

A signal peptide spans Met1–Ser18. Residue Cys19 is the site of N-palmitoyl cysteine attachment. Cys19 is lipidated: S-diacylglycerol cysteine. A disordered region spans residues Thr146–Gly172.

It belongs to the variable small protein (Vsp) family.

The protein resides in the cell outer membrane. Its function is as follows. The Vlp and Vsp proteins are antigenically distinct proteins, only one vlp or vsp gene is transcriptionally active at any one time. Switching between these genes is a mechanism of host immune response evasion. In Borrelia hermsii, this protein is Variable small protein 24.